The following is a 262-amino-acid chain: Adenosylcobinamide-GDP ribazoletransferase (262 aa).

6 helical membrane passes run tyrosine 43–glutamine 63, leucine 66–phenylalanine 86, glycine 120–leucine 140, alanine 146–phenylalanine 166, leucine 191–leucine 211, and alanine 242–leucine 262.

Belongs to the CobS family. It depends on Mg(2+) as a cofactor.

The protein localises to the cell inner membrane. It carries out the reaction alpha-ribazole + adenosylcob(III)inamide-GDP = adenosylcob(III)alamin + GMP + H(+). The catalysed reaction is alpha-ribazole 5'-phosphate + adenosylcob(III)inamide-GDP = adenosylcob(III)alamin 5'-phosphate + GMP + H(+). The protein operates within cofactor biosynthesis; adenosylcobalamin biosynthesis; adenosylcobalamin from cob(II)yrinate a,c-diamide: step 7/7. In terms of biological role, joins adenosylcobinamide-GDP and alpha-ribazole to generate adenosylcobalamin (Ado-cobalamin). Also synthesizes adenosylcobalamin 5'-phosphate from adenosylcobinamide-GDP and alpha-ribazole 5'-phosphate. This Shewanella baltica (strain OS195) protein is Adenosylcobinamide-GDP ribazoletransferase.